The sequence spans 539 residues: Membrane protein insertase YidC (539 aa).

A helical transmembrane segment spans residues 6–26 (VILAVALSFAVLLGWQFLFPP). A disordered region spans residues 28-63 (PQQPAPAQQEQTAQPNQAVDSSVAGPVSNQLPDPAS). Residues 32–45 (APAQQEQTAQPNQA) show a composition bias toward low complexity. Positions 54 to 63 (VSNQLPDPAS) are enriched in polar residues. 3 helical membrane passes run 349–369 (YGIAIILLTIVIKILFWPLSH), 421–441 (MLLQIPVFFGLYKALMGTVAL), and 496–516 (IMMFLPLVFTFMFLNFPSGLV).

This sequence belongs to the OXA1/ALB3/YidC family. Type 1 subfamily. Interacts with the Sec translocase complex via SecD. Specifically interacts with transmembrane segments of nascent integral membrane proteins during membrane integration.

It localises to the cell inner membrane. Required for the insertion and/or proper folding and/or complex formation of integral membrane proteins into the membrane. Involved in integration of membrane proteins that insert both dependently and independently of the Sec translocase complex, as well as at least some lipoproteins. Aids folding of multispanning membrane proteins. The protein is Membrane protein insertase YidC of Maridesulfovibrio salexigens (strain ATCC 14822 / DSM 2638 / NCIMB 8403 / VKM B-1763) (Desulfovibrio salexigens).